A 213-amino-acid polypeptide reads, in one-letter code: Pyridoxine/pyridoxamine 5'-phosphate oxidase (213 aa).

FMN is bound by residues 57 to 62, 77 to 78, arginine 83, lysine 84, and glutamine 106; these read RIVLLR and FT. Arginine 62 lines the substrate pocket. 3 residues coordinate substrate: tyrosine 124, arginine 128, and serine 132. Positions 135 to 163 are disordered; that stretch reads GARASDQSRPLPDRKTLQKRVEEEEARYP. Residue 141-142 coordinates FMN; sequence QS. Residues 145–163 show a composition bias toward basic and acidic residues; sequence LPDRKTLQKRVEEEEARYP. Tryptophan 186 is a binding site for FMN. 192 to 194 provides a ligand contact to substrate; that stretch reads RLH. Residue arginine 196 participates in FMN binding.

It belongs to the pyridoxamine 5'-phosphate oxidase family. Homodimer. Requires FMN as cofactor.

It catalyses the reaction pyridoxamine 5'-phosphate + O2 + H2O = pyridoxal 5'-phosphate + H2O2 + NH4(+). The catalysed reaction is pyridoxine 5'-phosphate + O2 = pyridoxal 5'-phosphate + H2O2. The protein operates within cofactor metabolism; pyridoxal 5'-phosphate salvage; pyridoxal 5'-phosphate from pyridoxamine 5'-phosphate: step 1/1. It functions in the pathway cofactor metabolism; pyridoxal 5'-phosphate salvage; pyridoxal 5'-phosphate from pyridoxine 5'-phosphate: step 1/1. Catalyzes the oxidation of either pyridoxine 5'-phosphate (PNP) or pyridoxamine 5'-phosphate (PMP) into pyridoxal 5'-phosphate (PLP). The chain is Pyridoxine/pyridoxamine 5'-phosphate oxidase from Granulibacter bethesdensis (strain ATCC BAA-1260 / CGDNIH1).